The chain runs to 542 residues: Chaperonin GroEL 1 (542 aa).

Residues 29–32 (TLGP), 86–90 (DGTTT), Gly413, 477–479 (NAA), and Asp493 contribute to the ATP site.

This sequence belongs to the chaperonin (HSP60) family. Forms a cylinder of 14 subunits composed of two heptameric rings stacked back-to-back. Interacts with the co-chaperonin GroES.

It localises to the cytoplasm. It catalyses the reaction ATP + H2O + a folded polypeptide = ADP + phosphate + an unfolded polypeptide.. Together with its co-chaperonin GroES, plays an essential role in assisting protein folding. The GroEL-GroES system forms a nano-cage that allows encapsulation of the non-native substrate proteins and provides a physical environment optimized to promote and accelerate protein folding. In Renibacterium salmoninarum (strain ATCC 33209 / DSM 20767 / JCM 11484 / NBRC 15589 / NCIMB 2235), this protein is Chaperonin GroEL 1.